The primary structure comprises 219 residues: MEHLANENSDSDIRYSFLSTLDHLPCELIRSLRLMQTIDLFKNEEDEPGMERACRDLLLVATYINDLVDDQIHFLKQHKKELEIQKSVTKNFNSSLENIKSKLTLEEPGAYKEPKLLLKINLKKAKSRERKESITSPTIGINQGDVTEGNNNQEEVYCFCRNVSYGPMVACDNPACPFEWFHYGCVGLKQAPKGKWYCSKDCKEIANQRSKSKRQKRRK.

The segment at 155–204 (EVYCFCRNVSYGPMVACDNPACPFEWFHYGCVGLKQAPKGKWYCSKDCKE) adopts a PHD-type; degenerate zinc-finger fold. Zn(2+) is bound by residues Cys-158, Cys-160, Cys-171, Cys-176, His-182, Cys-185, Cys-198, and Cys-202.

The protein belongs to the ING family. Component of the NuA3 histone acetyltransferase (HAT) complex. The NuA3 HAT complex has 2 functionally distinct forms that participate in transcription. The NuA3a HAT complex is composed of at least NTO1, SAS3, TAF14, YNG1 and EAF6. The NuA3b HAT complex contains an additional subunit, PDP3. Interacts with H3K4me3 and to a lesser extent with H3K4me2.

Its subcellular location is the nucleus. In terms of biological role, histone-binding component of the NuA3a histone acetyltransferase complex. Targets the NuA3a HAT complex via histone H3K4me3 to facilitate transcription initiation at promoter regions. SAS3 then acetylates H3K14, leading to transcription initiation at a subset of genes. YNG1 is required for the HAT activity of NuA3 but not for its integrity. Mediates the interaction of SAS3 with nucleosomes. The polypeptide is Protein YNG1 (YNG1) (Saccharomyces cerevisiae (strain ATCC 204508 / S288c) (Baker's yeast)).